A 337-amino-acid polypeptide reads, in one-letter code: Monoacylglycerol lipase ABHD6 (337 aa).

Residues 1-8 (MDLDVVNM) lie on the Extracellular side of the membrane. The helical; Signal-anchor for type II membrane protein transmembrane segment at 9 to 29 (FVIAGGTLAIPILAFVASFLL) threads the bilayer. Residues 30–337 (WPSALIRIYY…HNTDNNKKLD (308 aa)) are Cytoplasmic-facing. In terms of domain architecture, AB hydrolase-1 spans 72 to 313 (PSILMLHGFS…CGHSVVMERP (242 aa)). Phe-80 is a (9Z)-octadecenoate binding site. Ser-148 serves as the catalytic Nucleophile. Met-149 contributes to the (9Z)-octadecenoate binding site. Active-site charge relay system residues include Asp-278 and His-306. His-306 contacts (9Z)-octadecenoate.

The protein belongs to the AB hydrolase superfamily.

Its subcellular location is the late endosome membrane. It localises to the lysosome membrane. The protein resides in the mitochondrion membrane. It carries out the reaction Hydrolyzes glycerol monoesters of long-chain fatty acids.. The catalysed reaction is 1-octanoylglycerol + H2O = octanoate + glycerol + H(+). The enzyme catalyses 1-decanoylglycerol + H2O = decanoate + glycerol + H(+). It catalyses the reaction 1-dodecanoylglycerol + H2O = dodecanoate + glycerol + H(+). It carries out the reaction 1-tetradecanoylglycerol + H2O = tetradecanoate + glycerol + H(+). The catalysed reaction is 2-hexadecanoylglycerol + H2O = glycerol + hexadecanoate + H(+). The enzyme catalyses 2-(9Z-octadecenoyl)-glycerol + H2O = glycerol + (9Z)-octadecenoate + H(+). It catalyses the reaction 1-(9Z-octadecenoyl)-glycerol + H2O = glycerol + (9Z)-octadecenoate + H(+). It carries out the reaction 2-(9Z,12Z-octadecadienoyl)-glycerol + H2O = (9Z,12Z)-octadecadienoate + glycerol + H(+). The catalysed reaction is 2-(5Z,8Z,11Z,14Z-eicosatetraenoyl)-glycerol + H2O = glycerol + (5Z,8Z,11Z,14Z)-eicosatetraenoate + H(+). The enzyme catalyses 1-(5Z,8Z,11Z,14Z-eicosatetraenoyl)-glycerol + H2O = glycerol + (5Z,8Z,11Z,14Z)-eicosatetraenoate + H(+). It catalyses the reaction 1-(9Z,12Z-octadecadienoyl)-glycerol + H2O = (9Z,12Z)-octadecadienoate + glycerol + H(+). It carries out the reaction 3-(9Z-octadecenoyl)-sn-glycero-1-phospho-(3'-(9Z-octadecenoyl)-1'-sn-glycerol) + H2O = 3-(9Z-octadecenoyl)-sn-glycero-1-phospho-(1'-sn-glycerol) + (9Z)-octadecenoate + H(+). The catalysed reaction is (S,S)-2-(9Z-octadecenoyl)-sn-glycero-1-phospho-(2'-(9Z-octadecenoyl)-1'-sn-glycerol) + H2O = (S,S)-2-(9Z-octadecenoyl)-sn-glycero-1-phospho-(1'-sn-glycerol) + (9Z)-octadecenoate + H(+). The enzyme catalyses (R,R)-2-(9Z-octadecenoyl)-sn-glycero-3-phospho-(2'-(9Z-octadecenoyl)-3'-sn-glycerol) + H2O = (R,R)-2-(9Z-octadecenoyl)-sn-glycero-3-phospho-(3'-sn-glycerol) + (9Z)-octadecenoate + H(+). Functionally, lipase that preferentially hydrolysis medium-chain saturated monoacylglycerols including 2-arachidonoylglycerol. Through 2-arachidonoylglycerol degradation may regulate endocannabinoid signaling pathways. Also has a lysophosphatidyl lipase activity with a preference for lysophosphatidylglycerol among other lysophospholipids. Also able to degrade bis(monoacylglycero)phosphate (BMP) and constitutes the major enzyme for BMP catabolism. BMP, also known as lysobisphosphatidic acid, is enriched in late endosomes and lysosomes and plays a key role in the formation of intraluminal vesicles and in lipid sorting. This is Monoacylglycerol lipase ABHD6 from Homo sapiens (Human).